A 311-amino-acid polypeptide reads, in one-letter code: Pyrimidine-specific ribonucleoside hydrolase RihA (311 aa).

The active site involves histidine 240.

It belongs to the IUNH family. RihA subfamily.

Its function is as follows. Hydrolyzes cytidine or uridine to ribose and cytosine or uracil, respectively. The sequence is that of Pyrimidine-specific ribonucleoside hydrolase RihA from Klebsiella pneumoniae subsp. pneumoniae (strain ATCC 700721 / MGH 78578).